We begin with the raw amino-acid sequence, 164 residues long: UPF0305 protein MTH_812 (164 aa).

The protein belongs to the UPF0305 family.

The polypeptide is UPF0305 protein MTH_812 (Methanothermobacter thermautotrophicus (strain ATCC 29096 / DSM 1053 / JCM 10044 / NBRC 100330 / Delta H) (Methanobacterium thermoautotrophicum)).